The following is a 246-amino-acid chain: Probable fimbrial chaperone YadV (246 aa).

The first 25 residues, 1–25, serve as a signal peptide directing secretion; sequence MFFNTKHTTALCFVTCMAFSSSSIA.

Belongs to the periplasmic pilus chaperone family.

Its subcellular location is the periplasm. Part of the yadCKLM-htrE-yadVN fimbrial operon. Could contribute to adhesion to various surfaces in specific environmental niches. In Escherichia coli (strain K12), this protein is Probable fimbrial chaperone YadV (yadV).